The chain runs to 268 residues: Tryptophan synthase alpha chain (268 aa).

Active-site proton acceptor residues include Glu-49 and Asp-60.

Belongs to the TrpA family. Tetramer of two alpha and two beta chains.

It carries out the reaction (1S,2R)-1-C-(indol-3-yl)glycerol 3-phosphate + L-serine = D-glyceraldehyde 3-phosphate + L-tryptophan + H2O. Its pathway is amino-acid biosynthesis; L-tryptophan biosynthesis; L-tryptophan from chorismate: step 5/5. In terms of biological role, the alpha subunit is responsible for the aldol cleavage of indoleglycerol phosphate to indole and glyceraldehyde 3-phosphate. The sequence is that of Tryptophan synthase alpha chain from Yersinia pseudotuberculosis serotype O:3 (strain YPIII).